Here is an 80-residue protein sequence, read N- to C-terminus: Protein FAM229B (80 aa).

The interval 1–45 (MPFRFGTQPRRFPVEGGDSSIELESGLSSSASCNGKETSPNRQLR) is disordered. A compositionally biased stretch (low complexity) spans 15-32 (EGGDSSIELESGLSSSAS). Polar residues predominate over residues 33-42 (CNGKETSPNR).

The protein belongs to the FAM229 family.

The polypeptide is Protein FAM229B (Fam229b) (Rattus norvegicus (Rat)).